Here is a 118-residue protein sequence, read N- to C-terminus: Large ribosomal subunit protein bL20 (118 aa).

This sequence belongs to the bacterial ribosomal protein bL20 family.

Binds directly to 23S ribosomal RNA and is necessary for the in vitro assembly process of the 50S ribosomal subunit. It is not involved in the protein synthesizing functions of that subunit. The protein is Large ribosomal subunit protein bL20 of Protochlamydia amoebophila (strain UWE25).